A 224-amino-acid polypeptide reads, in one-letter code: uncharacterized protein (224 aa).

One can recognise a 4Fe-4S domain in the interval 9 to 68 (SKMVDVNEITKYLPGFNCGACGYKRCDLFAEALLNKDVKLEDCPFLLRERFKENYEKLKE). Residues cysteine 26, cysteine 29, cysteine 34, and cysteine 51 each contribute to the [4Fe-4S] cluster site.

It depends on [4Fe-4S] cluster as a cofactor.

This is an uncharacterized protein from Methanocaldococcus jannaschii (strain ATCC 43067 / DSM 2661 / JAL-1 / JCM 10045 / NBRC 100440) (Methanococcus jannaschii).